We begin with the raw amino-acid sequence, 153 residues long: Endoribonuclease YbeY (153 aa).

Positions 118, 122, and 128 each coordinate Zn(2+).

This sequence belongs to the endoribonuclease YbeY family. Zn(2+) serves as cofactor.

Its subcellular location is the cytoplasm. Functionally, single strand-specific metallo-endoribonuclease involved in late-stage 70S ribosome quality control and in maturation of the 3' terminus of the 16S rRNA. The protein is Endoribonuclease YbeY of Staphylococcus carnosus (strain TM300).